The primary structure comprises 344 residues: Microcin C7 self-immunity protein MccF (344 aa).

This sequence belongs to the peptidase S66 family.

Involved in specific self-immunity to microcin C7. The protein is Microcin C7 self-immunity protein MccF (mccF) of Escherichia coli.